A 397-amino-acid polypeptide reads, in one-letter code: Mycinamicin IV hydroxylase/epoxidase (397 aa).

Residues 63-86 form a disordered region; that stretch reads RGPSMTRDEPRTRPEMVKGGLLSM. The span at 68 to 78 shows a compositional bias: basic and acidic residues; the sequence is TRDEPRTRPEM. Gly81 contacts substrate. Heme-binding residues include His91, Arg95, Arg288, His344, and Cys346.

The protein belongs to the cytochrome P450 family. Requires heme as cofactor.

The protein operates within antibiotic biosynthesis; mycinamicin biosynthesis. Involved in the biosynthesis of mycinamicin, a 16-membered macrolide antibiotic. Catalyzes consecutive hydroxylation (at C14) and epoxidation (at C12-C13) reactions with mycinamicin IV as initial substrate, leading to mycinamicin II. These reactions require prior dimethylation of 6-deoxyallose to mycinose for effective conversion by the dual function MycG enzyme. This Micromonospora griseorubida protein is Mycinamicin IV hydroxylase/epoxidase.